The following is a 298-amino-acid chain: MARRSRHRLLLLLLRYLVVALGYHKAYGFSAPKDQQVVTAVEYQEAILACKTPKKTVSSRLEWKKLGRSVSFVYYQQTLQGDFKNRAEMIDFNIRIKNVTRSDAGKYRCEVSAPSEQGQNLEEDTVTLEVLVAPAVPSCEVPSSALSGTVVELRCQDKEGNPAPEYTWFKDGIRLLENPRLGSQSTNSSYTMNTKTGTLQFNTVSKLDTGEYSCEARNSVGYRRCPGKRMQVDDLNISGIIAAVVVVALVISVCGLGVCYAQRKGYFSKETSFQKSNSSSKATTMSENDFKHTKSFII.

The first 28 residues, 1-28 (MARRSRHRLLLLLLRYLVVALGYHKAYG), serve as a signal peptide directing secretion. The Extracellular segment spans residues 29-238 (FSAPKDQQVV…RMQVDDLNIS (210 aa)). The region spanning 32–127 (PKDQQVVTAV…GQNLEEDTVT (96 aa)) is the Ig-like V-type domain. 2 disulfides stabilise this stretch: Cys-50–Cys-109 and Cys-155–Cys-214. N-linked (GlcNAc...) asparagine glycans are attached at residues Asn-98, Asn-187, and Asn-236. Positions 134 to 238 (PAVPSCEVPS…RMQVDDLNIS (105 aa)) constitute an Ig-like C2-type domain. Residues 239–259 (GIIAAVVVVALVISVCGLGVC) traverse the membrane as a helical segment. Residues 260-298 (YAQRKGYFSKETSFQKSNSSSKATTMSENDFKHTKSFII) are Cytoplasmic-facing.

Belongs to the immunoglobulin superfamily. In terms of tissue distribution, highly expressed in heart, placenta, lung, foreskin and lymph node. Prominently expressed on high endothelial venules and also present on the endothelia of other vessels (at protein level). Also expressed in the brain in the caudate nuclei.

The protein localises to the cell membrane. It localises to the cell junction. Its subcellular location is the tight junction. Functionally, junctional adhesion protein that mediates heterotypic cell-cell interactions with its cognate receptor JAM3 to regulate different cellular processes. Plays a role in homing and mobilization of hematopoietic stem and progenitor cells within the bone marrow. At the surface of bone marrow stromal cells, it contributes to the retention of the hematopoietic stem and progenitor cells expressing JAM3. Plays a central role in leukocytes extravasation by facilitating not only transmigration but also tethering and rolling of leukocytes along the endothelium. Tethering and rolling of leukocytes are dependent on the binding by JAM2 of the integrin alpha-4/beta-1. Plays a role in spermatogenesis where JAM2 and JAM3, which are respectively expressed by Sertoli and germ cells, mediate an interaction between both cell types and play an essential role in the anchorage of germ cells onto Sertoli cells and the assembly of cell polarity complexes during spermatid differentiation. Also functions as an inhibitory somatodendritic cue that prevents the myelination of non-axonal parts of neurons. During myogenesis, it is involved in myocyte fusion. May also play a role in angiogenesis. This Homo sapiens (Human) protein is Junctional adhesion molecule B.